The chain runs to 177 residues: Nucleoside triphosphate/diphosphate phosphatase (177 aa).

Arg23 functions as the Proton donor in the catalytic mechanism. Mg(2+) contacts are provided by Asn87, Asp103, Asp105, Asp107, Asp120, and Glu123.

Belongs to the Ntdp family. The cofactor is Mg(2+).

It catalyses the reaction a ribonucleoside 5'-triphosphate + H2O = a ribonucleoside 5'-diphosphate + phosphate + H(+). It carries out the reaction a ribonucleoside 5'-diphosphate + H2O = a ribonucleoside 5'-phosphate + phosphate + H(+). Functionally, has nucleoside phosphatase activity towards nucleoside triphosphates and nucleoside diphosphates. The protein is Nucleoside triphosphate/diphosphate phosphatase of Streptococcus pneumoniae serotype 2 (strain D39 / NCTC 7466).